The sequence spans 435 residues: Diaminobutyrate--2-oxoglutarate transaminase (435 aa).

Lysine 266 is modified (N6-(pyridoxal phosphate)lysine).

This sequence belongs to the class-III pyridoxal-phosphate-dependent aminotransferase family. It depends on pyridoxal 5'-phosphate as a cofactor.

The catalysed reaction is L-2,4-diaminobutanoate + 2-oxoglutarate = L-aspartate 4-semialdehyde + L-glutamate. It participates in amine and polyamine biosynthesis; ectoine biosynthesis; L-ectoine from L-aspartate 4-semialdehyde: step 1/3. Catalyzes reversively the conversion of L-aspartate beta-semialdehyde (ASA) to L-2,4-diaminobutyrate (DABA) by transamination with L-glutamate. This Bordetella bronchiseptica (strain ATCC BAA-588 / NCTC 13252 / RB50) (Alcaligenes bronchisepticus) protein is Diaminobutyrate--2-oxoglutarate transaminase (ectB).